Consider the following 204-residue polypeptide: Refilin-A (204 aa).

A disordered region spans residues 1-52 (MVGHLHLQAMGDTREQSRDGLLDSPDSGLPPSPSPSPPFYALSPGTLDTRTT). Positions 12 to 21 (DTREQSRDGL) are enriched in basic and acidic residues. The span at 28-38 (GLPPSPSPSPP) shows a compositional bias: pro residues. An Asymmetric dimethylarginine modification is found at Arg151.

Belongs to the Refilin family. In terms of assembly, interacts with FLNA and FLNB. In terms of tissue distribution, detected in various tissues, with highest expression in lung, followed by spleen.

The protein localises to the cytoplasm. Its subcellular location is the cytoskeleton. In terms of biological role, involved in the regulation of the perinuclear actin network and nuclear shape through interaction with filamins. Plays an essential role in the formation of cartilaginous skeletal elements. The chain is Refilin-A (Rflna) from Mus musculus (Mouse).